The primary structure comprises 324 residues: PGR5-like protein 1A, chloroplastic (324 aa).

The transit peptide at 1-60 (MGSKMLFSLTSPRLFSAVSRKPSSSFSPSPPSPSSRTQWTQLSPGKSISLRRRVFLLPAK) directs the protein to the chloroplast. The segment at 16–42 (SAVSRKPSSSFSPSPPSPSSRTQWTQL) is disordered. The Stromal portion of the chain corresponds to 61 to 198 (ATTEQSGPVG…KVYSDLAVDY (138 aa)). Residues cysteine 82 and cysteine 183 are joined by a disulfide bond. Residues 199–219 (FKMLLLNVPATVVALGLFFFL) form a helical membrane-spanning segment. Residues 220 to 236 (DDITGFEITYIMELPEP) are Lumenal, thylakoid-facing. The helical transmembrane segment at 237–257 (YSFIFTWFAAVPVIVYLALSI) threads the bilayer. At 258 to 324 (TKLIIKDFLI…LITLPEGSQA (67 aa)) the chain is on the stromal side.

This sequence belongs to the PGR5 family. Homodimer and heterodimer with PGR5. Interacts with PGR5, FD2, petC, psaD1, LFNR1 and LFNR2. Also interacts with a Fe-containing cofactor (FCC). In terms of processing, disulfide bonds; Cys-300 and Cys-303 are probably involved in the formation of disulfide bridges with 'Cys-11' and 'Cys-105' of PGR5 while Cys-272 and Cys-275 are probably involved in the binding of a Fe-containing cofactor (FCC).

It is found in the plastid. The protein localises to the chloroplast thylakoid membrane. Its activity is regulated as follows. Inhibited by antimycin A. Ferredoxin-plastoquinone reductase involved in cyclic electron flow (CEF) around photosystem I. The homodimer is probably not involved in CEF. This is PGR5-like protein 1A, chloroplastic (PGRL1A) from Arabidopsis thaliana (Mouse-ear cress).